Consider the following 206-residue polypeptide: Protein SYM1 (206 aa).

3 helical membrane-spanning segments follow: residues 16–36 (PLIT…YLAQ), 103–123 (LVFA…VLEF), and 155–175 (LFNF…IFSI).

The protein belongs to the peroxisomal membrane protein PXMP2/4 family.

It is found in the mitochondrion inner membrane. Its function is as follows. May be involved in cellular response to stress. Required to maintain mitochondrial DNA (mtDNA) integrity and stability. The chain is Protein SYM1 (SYM1) from Debaryomyces hansenii (strain ATCC 36239 / CBS 767 / BCRC 21394 / JCM 1990 / NBRC 0083 / IGC 2968) (Yeast).